Consider the following 277-residue polypeptide: UPF0496 protein At3g48650 (277 aa).

The next 2 helical transmembrane spans lie at 124–144 (YIFF…LGAV) and 145–165 (SLVV…APLW).

This sequence belongs to the UPF0496 family.

The protein resides in the membrane. The protein is UPF0496 protein At3g48650 of Arabidopsis thaliana (Mouse-ear cress).